The chain runs to 42 residues: Osteocalcin (42 aa).

Residues 1–40 (YLDHGLGAPAPYVDPLEPKREVDELADQMGFQEAYRRFYG) form the Gla domain. Position 9 is a 4-hydroxyproline (Pro-9). Residues Glu-17, Glu-21, and Asp-23 each contribute to the Ca(2+) site. 4-carboxyglutamate is present on residues Glu-17 and Glu-21.

Belongs to the osteocalcin/matrix Gla protein family. In terms of processing, gamma-carboxyglutamic acid residues are formed by vitamin K dependent carboxylation. These residues are essential for the binding of calcium.

Its subcellular location is the secreted. Functionally, the carboxylated form is one of the main organic components of the bone matrix, which constitutes 1-2% of the total bone protein: it acts as a negative regulator of bone formation and is required to limit bone formation without impairing bone resorption or mineralization. The carboxylated form binds strongly to apatite and calcium. The uncarboxylated form acts as a hormone secreted by osteoblasts, which regulates different cellular processes, such as energy metabolism, male fertility and brain development. Regulates of energy metabolism by acting as a hormone favoring pancreatic beta-cell proliferation, insulin secretion and sensitivity and energy expenditure. Uncarboxylated osteocalcin hormone also promotes testosterone production in the testes: acts as a ligand for G protein-coupled receptor GPRC6A at the surface of Leydig cells, initiating a signaling response that promotes the expression of enzymes required for testosterone synthesis in a CREB-dependent manner. Also acts as a regulator of brain development: osteocalcin hormone crosses the blood-brain barrier and acts as a ligand for GPR158 on neurons, initiating a signaling response that prevents neuronal apoptosis in the hippocampus, favors the synthesis of all monoamine neurotransmitters and inhibits that of gamma-aminobutyric acid (GABA). Osteocalcin also crosses the placenta during pregnancy and maternal osteocalcin is required for fetal brain development. The protein is Osteocalcin of Camelops hesternus (Western camel).